Reading from the N-terminus, the 532-residue chain is NADH-quinone oxidoreductase subunit N 2 (532 aa).

14 helical membrane-spanning segments follow: residues 37-57 (VAPP…DLFL), 63-83 (RLLG…LIPL), 107-127 (FTLV…LLSL), 133-153 (LPAG…ALLP), 158-178 (LATL…LVGI), 192-212 (FFLS…FVYA), 241-261 (VALT…HFWV), 276-296 (LSVV…VVAF), 302-322 (VWGP…NVAA), 336-356 (LLAW…AAAA), 367-387 (VAYA…AAVV), 411-431 (LALG…IGLF), 444-464 (GLGW…YYYL), and 504-524 (TAIV…QTVL).

It belongs to the complex I subunit 2 family. In terms of assembly, NDH-1 is composed of 14 different subunits. Subunits NuoA, H, J, K, L, M, N constitute the membrane sector of the complex.

Its subcellular location is the cell membrane. The enzyme catalyses a quinone + NADH + 5 H(+)(in) = a quinol + NAD(+) + 4 H(+)(out). NDH-1 shuttles electrons from NADH, via FMN and iron-sulfur (Fe-S) centers, to quinones in the respiratory chain. The immediate electron acceptor for the enzyme in this species is believed to be a menaquinone. Couples the redox reaction to proton translocation (for every two electrons transferred, four hydrogen ions are translocated across the cytoplasmic membrane), and thus conserves the redox energy in a proton gradient. The sequence is that of NADH-quinone oxidoreductase subunit N 2 from Streptomyces griseus subsp. griseus (strain JCM 4626 / CBS 651.72 / NBRC 13350 / KCC S-0626 / ISP 5235).